The following is a 1162-amino-acid chain: PAN2-PAN3 deadenylation complex catalytic subunit PAN2 (1162 aa).

WD repeat units lie at residues 27 to 66 (AKEKSATKMAFDQDVNLIWVGDTYGRVSSYDPSYSLYTRH), 153 to 193 (NTVQ…VVKT), 196 to 233 (GHSCMVSSMDFRDHTLVTAGKSKRFNMMYPDQFVNVYD), and 300 to 339 (HPCQSVTQLQLSPSGDYIAFIEHDNNINMWSRSNGMTGFT). A linker region spans residues 341–491 (TATTILEYPD…LMNYKPSNDR (151 aa)). Residues 401-443 (VPLPPKSSAASSSHTALSTSSDSRPNTARSGNPSSGGQKYRLL) form a disordered region. Low complexity predominate over residues 407–423 (SSAASSSHTALSTSSDS). The span at 424 to 437 (RPNTARSGNPSSGG) shows a compositional bias: polar residues. Residues 492 to 904 (EVPPAFTKLQ…TPEIAIYSDA (413 aa)) enclose the USP domain. The Exonuclease domain occupies 956-1126 (VALDAEFVAL…IEDAYTALVL (171 aa)). A divalent metal cation-binding residues include aspartate 959, glutamate 961, aspartate 1068, and aspartate 1119.

Belongs to the peptidase C19 family. PAN2 subfamily. As to quaternary structure, forms a heterotrimer with an asymmetric homodimer of the regulatory subunit PAN3 to form the poly(A)-nuclease (PAN) deadenylation complex. A divalent metal cation is required as a cofactor.

Its subcellular location is the cytoplasm. The enzyme catalyses Exonucleolytic cleavage of poly(A) to 5'-AMP.. Positively regulated by the regulatory subunit PAN3. Its function is as follows. Catalytic subunit of the poly(A)-nuclease (PAN) deadenylation complex, one of two cytoplasmic mRNA deadenylases involved in mRNA turnover. PAN specifically shortens poly(A) tails of RNA and the activity is stimulated by poly(A)-binding protein PAB1. PAN deadenylation is followed by rapid degradation of the shortened mRNA tails by the CCR4-NOT complex. Deadenylated mRNAs are then degraded by two alternative mechanisms, namely exosome-mediated 3'-5' exonucleolytic degradation, or deadenylation-dependent mRNA decaping and subsequent 5'-3' exonucleolytic degradation by XRN1. May also be involved in post-transcriptional maturation of mRNA poly(A) tails. The polypeptide is PAN2-PAN3 deadenylation complex catalytic subunit PAN2 (Eremothecium gossypii (strain ATCC 10895 / CBS 109.51 / FGSC 9923 / NRRL Y-1056) (Yeast)).